A 264-amino-acid chain; its full sequence is Glutamate racemase (264 aa).

Substrate-binding positions include 9 to 10 and 41 to 42; these read DS and YG. Cys72 (proton donor/acceptor) is an active-site residue. 73 to 74 contributes to the substrate binding site; that stretch reads NT. Catalysis depends on Cys183, which acts as the Proton donor/acceptor. Residue 184-185 coordinates substrate; the sequence is TH.

It belongs to the aspartate/glutamate racemases family.

The enzyme catalyses L-glutamate = D-glutamate. The protein operates within cell wall biogenesis; peptidoglycan biosynthesis. In terms of biological role, provides the (R)-glutamate required for cell wall biosynthesis. In Geobacillus kaustophilus (strain HTA426), this protein is Glutamate racemase.